The chain runs to 419 residues: Tyrosine--tRNA ligase (419 aa).

Tyrosine 34 is a binding site for L-tyrosine. The 'HIGH' region signature appears at 39–48 (PTADSLHIGN). L-tyrosine-binding residues include tyrosine 169 and glutamine 173. The short motif at 230–234 (KFGKT) is the 'KMSKS' region element. Lysine 233 contributes to the ATP binding site. Positions 352-419 (VPLVELLVSA…KKKYYLIRYA (68 aa)) constitute an S4 RNA-binding domain.

Belongs to the class-I aminoacyl-tRNA synthetase family. TyrS type 1 subfamily. In terms of assembly, homodimer.

It is found in the cytoplasm. It catalyses the reaction tRNA(Tyr) + L-tyrosine + ATP = L-tyrosyl-tRNA(Tyr) + AMP + diphosphate + H(+). Catalyzes the attachment of tyrosine to tRNA(Tyr) in a two-step reaction: tyrosine is first activated by ATP to form Tyr-AMP and then transferred to the acceptor end of tRNA(Tyr). This Geobacillus kaustophilus (strain HTA426) protein is Tyrosine--tRNA ligase.